We begin with the raw amino-acid sequence, 334 residues long: Methionyl-tRNA formyltransferase (334 aa).

Residue 111 to 114 (SILP) participates in (6S)-5,6,7,8-tetrahydrofolate binding.

It belongs to the Fmt family.

The catalysed reaction is L-methionyl-tRNA(fMet) + (6R)-10-formyltetrahydrofolate = N-formyl-L-methionyl-tRNA(fMet) + (6S)-5,6,7,8-tetrahydrofolate + H(+). In terms of biological role, attaches a formyl group to the free amino group of methionyl-tRNA(fMet). The formyl group appears to play a dual role in the initiator identity of N-formylmethionyl-tRNA by promoting its recognition by IF2 and preventing the misappropriation of this tRNA by the elongation apparatus. The chain is Methionyl-tRNA formyltransferase from Trichormus variabilis (strain ATCC 29413 / PCC 7937) (Anabaena variabilis).